The primary structure comprises 262 residues: Trypsin theta (262 aa).

The first 19 residues, 1–19, serve as a signal peptide directing secretion; it reads MHGLVVLLVCLAVGSAFAG. A propeptide spans 20-34 (activation peptide); the sequence is TIGVSNADPFEREGR. Positions 35-260 constitute a Peptidase S1 domain; it reads IVGGEDTTIR…LRKWILNASQ (226 aa). A disulfide bridge links Cys-61 with Cys-77. Active-site charge relay system residues include His-76 and Asp-121. 2 disulfides stabilise this stretch: Cys-186-Cys-203 and Cys-212-Cys-236. The active-site Charge relay system is the Ser-216.

Belongs to the peptidase S1 family.

The protein resides in the secreted. It localises to the extracellular space. It catalyses the reaction Preferential cleavage: Arg-|-Xaa, Lys-|-Xaa.. The protein is Trypsin theta (thetaTry) of Drosophila erecta (Fruit fly).